Reading from the N-terminus, the 348-residue chain is Protein pelota homolog (348 aa).

Belongs to the eukaryotic release factor 1 family. Pelota subfamily. As to quaternary structure, monomer. The cofactor is a divalent metal cation.

It localises to the cytoplasm. Its function is as follows. May function in recognizing stalled ribosomes, interact with stem-loop structures in stalled mRNA molecules, and effect endonucleolytic cleavage of the mRNA. May play a role in the release non-functional ribosomes and degradation of damaged mRNAs. Has endoribonuclease activity. This is Protein pelota homolog from Methanococcus maripaludis (strain C7 / ATCC BAA-1331).